A 383-amino-acid polypeptide reads, in one-letter code: uncharacterized protein (383 aa).

Residues methionine 1–isoleucine 55 are disordered. Residues proline 13 to aspartate 24 show a composition bias toward basic and acidic residues. Polar residues predominate over residues serine 25–phenylalanine 44. The segment covering lysine 46–isoleucine 55 has biased composition (basic and acidic residues). Helical transmembrane passes span leucine 87 to asparagine 107, asparagine 112 to valine 132, phenylalanine 157 to valine 177, phenylalanine 179 to leucine 199, leucine 205 to glutamate 225, valine 228 to valine 248, leucine 262 to leucine 282, phenylalanine 299 to threonine 319, tyrosine 329 to glycine 349, and leucine 352 to leucine 372.

The protein belongs to the TPT transporter family.

It localises to the membrane. This is an uncharacterized protein from Schizosaccharomyces pombe (strain 972 / ATCC 24843) (Fission yeast).